Here is a 131-residue protein sequence, read N- to C-terminus: Lactose permease (131 aa).

The Cytoplasmic segment spans residues 1–13; that stretch reads MKFSELAPRERHN. A helical transmembrane segment spans residues 14-34; it reads FVYFLLFFFFYHFIMSAYFPF. Residues 35–50 are Periplasmic-facing; sequence FPVWLADVNHLTKTET. A helical transmembrane segment spans residues 51-71; sequence GIVFSSISLFAIIFQPVFGLM. Over 72–80 the chain is Cytoplasmic; the sequence is SDKLGLRKH. Residues 81–101 traverse the membrane as a helical segment; that stretch reads LLWTITVLLILFAPFFIFVFS. Position 102 (proline 102) is a topological domain, periplasmic. A helical membrane pass occupies residues 103–123; it reads LLQMNIIAGSLVGGIYLGIVF. The Cytoplasmic portion of the chain corresponds to 124 to 131; the sequence is STAPGVGS.

The protein belongs to the major facilitator superfamily. Oligosaccharide:H(+) symporter (OHS) (TC 2.A.1.5) family.

Its subcellular location is the cell inner membrane. It catalyses the reaction lactose(in) + H(+)(in) = lactose(out) + H(+)(out). Responsible for transport of beta-galactosides into the cell, with the concomitant import of a proton (symport system). This is Lactose permease (lacY) from Klebsiella pneumoniae.